Consider the following 243-residue polypeptide: Leucyl/phenylalanyl-tRNA--protein transferase (243 aa).

The protein belongs to the L/F-transferase family.

It is found in the cytoplasm. The catalysed reaction is N-terminal L-lysyl-[protein] + L-leucyl-tRNA(Leu) = N-terminal L-leucyl-L-lysyl-[protein] + tRNA(Leu) + H(+). The enzyme catalyses N-terminal L-arginyl-[protein] + L-leucyl-tRNA(Leu) = N-terminal L-leucyl-L-arginyl-[protein] + tRNA(Leu) + H(+). It catalyses the reaction L-phenylalanyl-tRNA(Phe) + an N-terminal L-alpha-aminoacyl-[protein] = an N-terminal L-phenylalanyl-L-alpha-aminoacyl-[protein] + tRNA(Phe). Its function is as follows. Functions in the N-end rule pathway of protein degradation where it conjugates Leu, Phe and, less efficiently, Met from aminoacyl-tRNAs to the N-termini of proteins containing an N-terminal arginine or lysine. This chain is Leucyl/phenylalanyl-tRNA--protein transferase, found in Vibrio cholerae serotype O1 (strain ATCC 39541 / Classical Ogawa 395 / O395).